Here is a 150-residue protein sequence, read N- to C-terminus: SsrA-binding protein (150 aa).

This sequence belongs to the SmpB family.

It localises to the cytoplasm. Functionally, required for rescue of stalled ribosomes mediated by trans-translation. Binds to transfer-messenger RNA (tmRNA), required for stable association of tmRNA with ribosomes. tmRNA and SmpB together mimic tRNA shape, replacing the anticodon stem-loop with SmpB. tmRNA is encoded by the ssrA gene; the 2 termini fold to resemble tRNA(Ala) and it encodes a 'tag peptide', a short internal open reading frame. During trans-translation Ala-aminoacylated tmRNA acts like a tRNA, entering the A-site of stalled ribosomes, displacing the stalled mRNA. The ribosome then switches to translate the ORF on the tmRNA; the nascent peptide is terminated with the 'tag peptide' encoded by the tmRNA and targeted for degradation. The ribosome is freed to recommence translation, which seems to be the essential function of trans-translation. The protein is SsrA-binding protein of Campylobacter curvus (strain 525.92).